Reading from the N-terminus, the 510-residue chain is Histidine ammonia-lyase (510 aa).

The 5-imidazolinone (Ala-Gly) cross-link spans 143-145 (ASG). The residue at position 144 (serine 144) is a 2,3-didehydroalanine (Ser).

It belongs to the PAL/histidase family. Post-translationally, contains an active site 4-methylidene-imidazol-5-one (MIO), which is formed autocatalytically by cyclization and dehydration of residues Ala-Ser-Gly.

It is found in the cytoplasm. The catalysed reaction is L-histidine = trans-urocanate + NH4(+). It participates in amino-acid degradation; L-histidine degradation into L-glutamate; N-formimidoyl-L-glutamate from L-histidine: step 1/3. The sequence is that of Histidine ammonia-lyase from Aliivibrio fischeri (strain ATCC 700601 / ES114) (Vibrio fischeri).